Reading from the N-terminus, the 1384-residue chain is ATP-dependent RNA helicase TDRD9 (1384 aa).

The tract at residues 35-60 is disordered; sequence EAPREEVQRSEEVPSEAPTAQAQDPV. The segment covering 36–46 has biased composition (basic and acidic residues); that stretch reads APREEVQRSEE. One can recognise a Helicase ATP-binding domain in the interval 144 to 310; it reads ISLIESNSVV…FAVPVQNKMN (167 aa). 157 to 164 lines the ATP pocket; the sequence is GATGSGKS. The DEAH box signature appears at 256 to 259; that stretch reads DEVH. One can recognise a Helicase C-terminal domain in the interval 379-546; the sequence is SGAQFVSERS…VLKVKLLDMG (168 aa). One can recognise a Tudor domain in the interval 946–1006; that stretch reads HPHPDLVCLA…REIPCQLLEL (61 aa).

This sequence belongs to the DEAD box helicase family. DEAH subfamily. In terms of assembly, interacts with piRNA-associated proteins PIWIL1 and PIWIL4.

The protein localises to the cytoplasm. It is found in the nucleus. The catalysed reaction is ATP + H2O = ADP + phosphate + H(+). Its function is as follows. ATP-binding RNA helicase which plays a central role during spermatogenesis by repressing transposable elements and preventing their mobilization, which is essential for the germline integrity. Acts via the piRNA metabolic process, which mediates the repression of transposable elements during meiosis by forming complexes composed of piRNAs and Piwi proteins and governs the methylation and subsequent repression of transposons. Acts downstream of piRNA biogenesis: exclusively required for transposon silencing in the nucleus, suggesting that it acts as a nuclear effector in the nucleus together with PIWIL4. In Rattus norvegicus (Rat), this protein is ATP-dependent RNA helicase TDRD9.